The sequence spans 330 residues: DNA-directed RNA polymerase subunit alpha (330 aa).

The tract at residues 1-236 (MQNSVIEFLK…EQLEAFIDLR (236 aa)) is alpha N-terminal domain (alpha-NTD). The segment at 250 to 330 (FDPILLRLVD…NWPPTNILDN (81 aa)) is alpha C-terminal domain (alpha-CTD).

The protein belongs to the RNA polymerase alpha chain family. As to quaternary structure, homodimer. The RNAP catalytic core consists of 2 alpha, 1 beta, 1 beta' and 1 omega subunit. When a sigma factor is associated with the core the holoenzyme is formed, which can initiate transcription.

The catalysed reaction is RNA(n) + a ribonucleoside 5'-triphosphate = RNA(n+1) + diphosphate. In terms of biological role, DNA-dependent RNA polymerase catalyzes the transcription of DNA into RNA using the four ribonucleoside triphosphates as substrates. The polypeptide is DNA-directed RNA polymerase subunit alpha (Blochmanniella pennsylvanica (strain BPEN)).